The primary structure comprises 439 residues: Type I secretion system membrane fusion protein PrsE (439 aa).

Residues 20 to 40 form a helical membrane-spanning segment; the sequence is LIGVSVLALALVAGVGGWAAT.

The protein belongs to the membrane fusion protein (MFP) (TC 8.A.1) family. Part of a type I secretion system composed of PrsD and PrsE.

The protein localises to the cell inner membrane. Functionally, mediates secretion of glycanase ExsH. The sequence is that of Type I secretion system membrane fusion protein PrsE (prsE) from Rhizobium meliloti (strain 1021) (Ensifer meliloti).